A 131-amino-acid polypeptide reads, in one-letter code: Holo-[acyl-carrier-protein] synthase (131 aa).

Mg(2+) is bound by residues Asp-8 and Glu-59.

It belongs to the P-Pant transferase superfamily. AcpS family. Mg(2+) serves as cofactor.

It is found in the cytoplasm. It carries out the reaction apo-[ACP] + CoA = holo-[ACP] + adenosine 3',5'-bisphosphate + H(+). Functionally, transfers the 4'-phosphopantetheine moiety from coenzyme A to a Ser of acyl-carrier-protein. The chain is Holo-[acyl-carrier-protein] synthase from Rickettsia africae (strain ESF-5).